A 780-amino-acid polypeptide reads, in one-letter code: LPS-assembly protein LptD (780 aa).

An N-terminal signal peptide occupies residues 1-24; sequence MKKRFPTLLATLIWTALYSQHTLA.

Belongs to the LptD family. As to quaternary structure, component of the lipopolysaccharide transport and assembly complex. Interacts with LptE and LptA.

The protein localises to the cell outer membrane. Functionally, together with LptE, is involved in the assembly of lipopolysaccharide (LPS) at the surface of the outer membrane. This chain is LPS-assembly protein LptD, found in Yersinia pestis bv. Antiqua (strain Antiqua).